Consider the following 817-residue polypeptide: DNA replication licensing factor Mcm6 (817 aa).

The C4-type zinc finger occupies 152-179 (CLDCQTEIRNVEQQFKFTNPTICRNPVC). One can recognise an MCM domain in the interval 338–544 (LYQNLISSLF…VVDYAIARKI (207 aa)). ATP contacts are provided by serine 391, threonine 392, alanine 393, lysine 394, serine 395, and asparagine 496. An Arginine finger motif is present at residues 520–523 (SRFD). ADP is bound by residues arginine 611 and glutamate 614.

This sequence belongs to the MCM family. In terms of assembly, component of the Mcm2-7 complex. The complex forms a toroidal hexameric ring with the proposed subunit order Mcm2-Mcm6-Mcm4-Mcm7-Mcm3-Mcm5. The heterodimers of Mcm4/Mcm6 and Mcm3/Mcm5 interact with Mcm2 and Mcm7. As to expression, in stage 12 embryos, strongly expressed in the CNS and weakly in the gut.

The protein localises to the nucleus. The enzyme catalyses ATP + H2O = ADP + phosphate + H(+). In terms of biological role, acts as a component of the Mcm2-7 complex (Mcm complex) which is the putative replicative helicase essential for 'once per cell cycle' DNA replication initiation and elongation in eukaryotic cells. Core component of CDC45-MCM-GINS (CMG) helicase, the molecular machine that unwinds template DNA during replication, and around which the replisome is built. The active ATPase sites in the Mcm2-7 ring are formed through the interaction surfaces of two neighboring subunits such that a critical structure of a conserved arginine finger motif is provided in trans relative to the ATP-binding site of the Walker A box of the adjacent subunit. The six ATPase active sites, however, are likely to contribute differentially to the complex helicase activity Required for DNA replication and cell proliferation. Required for mitotic cycles, endocycles, and the special S phase associated with the amplification of chorion genes; has a role in origin unwinding or fork elongation at chorion loci. The sequence is that of DNA replication licensing factor Mcm6 from Drosophila melanogaster (Fruit fly).